A 101-amino-acid chain; its full sequence is MNIAEFHQNIEQVWQKIEEELENQGADVDCETQGSVFTITFDNRTQIVINKQEPLLELWIASKLGGFHFAFKNGDWVSNDGQRFWDCFVEACAAHGENVQF.

Belongs to the frataxin family.

Its function is as follows. Involved in iron-sulfur (Fe-S) cluster assembly. May act as a regulator of Fe-S biogenesis. The polypeptide is Iron-sulfur cluster assembly protein CyaY (Haemophilus influenzae (strain 86-028NP)).